We begin with the raw amino-acid sequence, 77 residues long: Putative defensin-like protein 160 (77 aa).

An N-terminal signal peptide occupies residues M1–C24. Intrachain disulfides connect C30–C77, C40–C59, C45–C71, and C49–C73.

It belongs to the DEFL family.

The protein resides in the secreted. This chain is Putative defensin-like protein 160 (LCR26), found in Arabidopsis thaliana (Mouse-ear cress).